The sequence spans 1050 residues: Self-sufficient cytochrome P450 monooxygenase CYP505E5 (1050 aa).

C405 contributes to the heme binding site. Positions 461–495 (TATGLSRRSMLVARDGSSEESSNHPAEARGDHAPA) are disordered. One can recognise a Flavodoxin-like domain in the interval 500-641 (VSFFYGSNSG…DLEAWEETSL (142 aa)). FMN-binding positions include 506–510 (SNSGT) and 585–617 (VFGCGHHDWTQTFYRIPILIDDLMYKAGATRLA). One can recognise an FAD-binding FR-type domain in the interval 679–907 (KGLIEAKVTA…RPAKETFHLP (229 aa)).

This sequence in the N-terminal section; belongs to the cytochrome P450 family. The cofactor is FAD. It depends on FMN as a cofactor. Heme serves as cofactor.

It carries out the reaction 2 oxidized [cytochrome P450] + NADPH = 2 reduced [cytochrome P450] + NADP(+) + H(+). It catalyses the reaction an organic molecule + reduced [NADPH--hemoprotein reductase] + O2 = an alcohol + oxidized [NADPH--hemoprotein reductase] + H2O + H(+). The catalysed reaction is dodecanoate + reduced [NADPH--hemoprotein reductase] + O2 = 5-hydroxydodecanoate + oxidized [NADPH--hemoprotein reductase] + H2O + H(+). The enzyme catalyses tetradecanoate + reduced [NADPH--hemoprotein reductase] + O2 = 7-hydroxytetradecanoate + oxidized [NADPH--hemoprotein reductase] + H2O + H(+). It carries out the reaction dodecan-1-ol + reduced [NADPH--hemoprotein reductase] + O2 = 1,5-dodecanediol + oxidized [NADPH--hemoprotein reductase] + H2O + H(+). It catalyses the reaction dodecan-1-ol + reduced [NADPH--hemoprotein reductase] + O2 = 1,4-dodecanediol + oxidized [NADPH--hemoprotein reductase] + H2O + H(+). The catalysed reaction is dodecan-1-ol + reduced [NADPH--hemoprotein reductase] + O2 = 1,6-dodecanediol + oxidized [NADPH--hemoprotein reductase] + H2O + H(+). Self-sufficient cytochrome P450 monooxygenase that catalyzes the regioselective in-chain hydroxylation of alkanes, fatty alcohols, and fatty acids at the omega-7 position. Performs hydroxylation of C10-C16 n-alkanes and C12 and C14 fatty alcohols; and thereby enables the one step biocatalytic synthesis of rare alcohols such as 5-dodecanol and 7-tetradecanol. Converts 1-dodecanol into 1,5-dodecanediol as major product with very little sub-terminally hydroxylated products with the 1,4-dodecanediol and 1,6-dodecanediol more abundant. Converts dodecanoic acid to 5-hydroxydodecanoic acid which can be further converted into delta-dodecalactone by lactonization of the 5-hydroxy acid at low pH. Also gives sub-terminal hydroxylation of dodecanoic acid with 9-hydroxydodecanoic acid being the second most abundant product. In Aspergillus kawachii (strain NBRC 4308) (White koji mold), this protein is Self-sufficient cytochrome P450 monooxygenase CYP505E5.